Reading from the N-terminus, the 145-residue chain is 3-dehydroquinate dehydratase (145 aa).

The Proton acceptor role is filled by tyrosine 23. Substrate is bound by residues asparagine 75, histidine 81, and aspartate 88. Catalysis depends on histidine 101, which acts as the Proton donor. Substrate-binding positions include 102-103 (LS) and arginine 112.

This sequence belongs to the type-II 3-dehydroquinase family. In terms of assembly, homododecamer.

It carries out the reaction 3-dehydroquinate = 3-dehydroshikimate + H2O. The protein operates within metabolic intermediate biosynthesis; chorismate biosynthesis; chorismate from D-erythrose 4-phosphate and phosphoenolpyruvate: step 3/7. In terms of biological role, catalyzes a trans-dehydration via an enolate intermediate. The polypeptide is 3-dehydroquinate dehydratase (Legionella pneumophila (strain Paris)).